The following is a 217-amino-acid chain: Large ribosomal subunit protein bL25 (217 aa).

Low complexity predominate over residues 195 to 211 (PAEGAAAAPAKGAAKGA). Positions 195 to 217 (PAEGAAAAPAKGAAKGAAKGGKK) are disordered.

It belongs to the bacterial ribosomal protein bL25 family. CTC subfamily. Part of the 50S ribosomal subunit; part of the 5S rRNA/L5/L18/L25 subcomplex. Contacts the 5S rRNA. Binds to the 5S rRNA independently of L5 and L18.

This is one of the proteins that binds to the 5S RNA in the ribosome where it forms part of the central protuberance. The protein is Large ribosomal subunit protein bL25 of Acidiphilium cryptum (strain JF-5).